Here is a 581-residue protein sequence, read N- to C-terminus: Putative aluminum-activated malate transporter 3 (581 aa).

A run of 6 helical transmembrane segments spans residues 98–118, 122–142, 148–164, 167–187, 201–218, and 231–251; these read MGLALTLTSILIFFKIPGLEL, YLWAILTVVVIFEFSIGATFS, GLGTLSAGGLALGMSWI, MTGNWADVFNAASIFVVAFFA, YGFRVFLLTYCYVIVSGY, and FLLIALGASVGLIVNTCIYPI.

The protein belongs to the aromatic acid exporter (TC 2.A.85) family.

The protein localises to the membrane. Malate transporter. In Arabidopsis thaliana (Mouse-ear cress), this protein is Putative aluminum-activated malate transporter 3 (ALMT3).